The chain runs to 424 residues: Serine hydroxymethyltransferase 2 (424 aa).

(6S)-5,6,7,8-tetrahydrofolate is bound by residues Leu-125 and 129–131 (GHL). N6-(pyridoxal phosphate)lysine is present on Lys-234. Residue Glu-250 coordinates (6S)-5,6,7,8-tetrahydrofolate.

The protein belongs to the SHMT family. As to quaternary structure, homodimer. Pyridoxal 5'-phosphate serves as cofactor.

The protein resides in the cytoplasm. The catalysed reaction is (6R)-5,10-methylene-5,6,7,8-tetrahydrofolate + glycine + H2O = (6S)-5,6,7,8-tetrahydrofolate + L-serine. The protein operates within one-carbon metabolism; tetrahydrofolate interconversion. It functions in the pathway amino-acid biosynthesis; glycine biosynthesis; glycine from L-serine: step 1/1. Its function is as follows. Catalyzes the reversible interconversion of serine and glycine with tetrahydrofolate (THF) serving as the one-carbon carrier. This reaction serves as the major source of one-carbon groups required for the biosynthesis of purines, thymidylate, methionine, and other important biomolecules. Also exhibits THF-independent aldolase activity toward beta-hydroxyamino acids, producing glycine and aldehydes, via a retro-aldol mechanism. This Burkholderia pseudomallei (strain 1710b) protein is Serine hydroxymethyltransferase 2.